The sequence spans 236 residues: Probable transmembrane ascorbate ferrireductase 4 (236 aa).

The 197-residue stretch at F14 to I210 folds into the Cytochrome b561 domain. The next 3 helical transmembrane spans lie at L17 to G37, T42 to I62, and V76 to F96. Positions 44, 77, and 110 each coordinate heme b. 3 helical membrane-spanning segments follow: residues W112–F132, T144–A164, and V191–L211. H149 contacts heme b.

As to quaternary structure, homodimer. The cofactor is heme b.

The protein localises to the membrane. The enzyme catalyses Fe(3+)(out) + L-ascorbate(in) = monodehydro-L-ascorbate radical(in) + Fe(2+)(out) + H(+). Its function is as follows. Two-heme-containing cytochrome. May catalyze ascorbate-dependent trans-membrane ferric-chelate reduction. This is Probable transmembrane ascorbate ferrireductase 4 (CYB561D) from Arabidopsis thaliana (Mouse-ear cress).